Reading from the N-terminus, the 525-residue chain is Zinc finger protein 678 (525 aa).

14 C2H2-type zinc fingers span residues Phe97–His119, Tyr125–His147, Tyr153–His175, Tyr181–His203, Tyr209–His231, Tyr237–His259, Tyr265–His287, Tyr293–His315, Tyr321–His343, Tyr349–His371, Tyr377–His399, Tyr405–His427, Tyr433–His455, and Tyr461–His483. The C2H2-type 15; degenerate zinc-finger motif lies at Tyr489–Tyr511.

It belongs to the krueppel C2H2-type zinc-finger protein family.

It localises to the nucleus. May be involved in transcriptional regulation. This is Zinc finger protein 678 (ZNF678) from Homo sapiens (Human).